Reading from the N-terminus, the 418-residue chain is uncharacterized protein (418 aa).

The next 10 membrane-spanning stretches (helical) occupy residues 51–71 (FVMAVGGIAAIVAQTPIGALV), 79–99 (ALVVAGAVLVTAAAVAMPLFA), 110–130 (VTGIASSVFAPALAAITLGAV), 163–183 (FFGPVVVFWVLAGMALISVLA), 224–244 (VIFGAAVVAFHFANAAMLPLV), 258–278 (ALMSSCIVAAQVVMVPVAYVV), 289–309 (PIFLVGFAVLTARGFLYTLSD), 315–335 (VGVQLLDGIGAGIFGALFPLV), 356–376 (ATGIGAALSNLVAGWIVVVAG), and 379–399 (AAFMSLGALAGAGFLLYLVAM).

Belongs to the major facilitator superfamily.

The protein localises to the cell membrane. This is an uncharacterized protein from Mycobacterium tuberculosis (strain CDC 1551 / Oshkosh).